A 378-amino-acid chain; its full sequence is Erythronate-4-phosphate dehydrogenase (378 aa).

Residues Ser45 and Thr67 each contribute to the substrate site. Asp147 is an NAD(+) binding site. Residue Arg209 is part of the active site. Asp233 serves as a coordination point for NAD(+). Glu238 is a catalytic residue. His255 (proton donor) is an active-site residue. Gly258 serves as a coordination point for NAD(+). Position 259 (Tyr259) interacts with substrate.

This sequence belongs to the D-isomer specific 2-hydroxyacid dehydrogenase family. PdxB subfamily. Homodimer.

It is found in the cytoplasm. The catalysed reaction is 4-phospho-D-erythronate + NAD(+) = (R)-3-hydroxy-2-oxo-4-phosphooxybutanoate + NADH + H(+). The protein operates within cofactor biosynthesis; pyridoxine 5'-phosphate biosynthesis; pyridoxine 5'-phosphate from D-erythrose 4-phosphate: step 2/5. Functionally, catalyzes the oxidation of erythronate-4-phosphate to 3-hydroxy-2-oxo-4-phosphonooxybutanoate. This chain is Erythronate-4-phosphate dehydrogenase, found in Shewanella denitrificans (strain OS217 / ATCC BAA-1090 / DSM 15013).